Consider the following 354-residue polypeptide: Probable L-ascorbate-6-phosphate lactonase UlaG (354 aa).

The protein belongs to the UlaG family. A divalent metal cation is required as a cofactor.

Its subcellular location is the cytoplasm. It carries out the reaction L-ascorbate 6-phosphate + H2O = 3-dehydro-L-gulonate 6-phosphate. Its pathway is cofactor degradation; L-ascorbate degradation; D-xylulose 5-phosphate from L-ascorbate: step 1/4. Functionally, probably catalyzes the hydrolysis of L-ascorbate-6-P into 3-keto-L-gulonate-6-P. Is essential for L-ascorbate utilization under anaerobic conditions. This is Probable L-ascorbate-6-phosphate lactonase UlaG from Escherichia coli O127:H6 (strain E2348/69 / EPEC).